Here is a 330-residue protein sequence, read N- to C-terminus: Aspartate--ammonia ligase (330 aa).

It belongs to the class-II aminoacyl-tRNA synthetase family. AsnA subfamily.

The protein resides in the cytoplasm. The catalysed reaction is L-aspartate + NH4(+) + ATP = L-asparagine + AMP + diphosphate + H(+). It functions in the pathway amino-acid biosynthesis; L-asparagine biosynthesis; L-asparagine from L-aspartate (ammonia route): step 1/1. The polypeptide is Aspartate--ammonia ligase (Shigella sonnei (strain Ss046)).